A 408-amino-acid chain; its full sequence is Acetylornithine/succinyldiaminopimelate aminotransferase (408 aa).

Residues 108–109 (GA) and F141 contribute to the pyridoxal 5'-phosphate site. Position 144 (R144) interacts with N(2)-acetyl-L-ornithine. Position 226–229 (226–229 (DEIQ)) interacts with pyridoxal 5'-phosphate. K255 bears the N6-(pyridoxal phosphate)lysine mark. T283 is a binding site for N(2)-acetyl-L-ornithine. Residue T284 participates in pyridoxal 5'-phosphate binding.

The protein belongs to the class-III pyridoxal-phosphate-dependent aminotransferase family. ArgD subfamily. Homodimer. The cofactor is pyridoxal 5'-phosphate.

The protein localises to the cytoplasm. The catalysed reaction is N(2)-acetyl-L-ornithine + 2-oxoglutarate = N-acetyl-L-glutamate 5-semialdehyde + L-glutamate. The enzyme catalyses N-succinyl-(2S,6S)-2,6-diaminopimelate + 2-oxoglutarate = (S)-2-succinylamino-6-oxoheptanedioate + L-glutamate. It functions in the pathway amino-acid biosynthesis; L-arginine biosynthesis; N(2)-acetyl-L-ornithine from L-glutamate: step 4/4. It participates in amino-acid biosynthesis; L-lysine biosynthesis via DAP pathway; LL-2,6-diaminopimelate from (S)-tetrahydrodipicolinate (succinylase route): step 2/3. Functionally, involved in both the arginine and lysine biosynthetic pathways. The chain is Acetylornithine/succinyldiaminopimelate aminotransferase from Buchnera aphidicola subsp. Acyrthosiphon pisum (strain APS) (Acyrthosiphon pisum symbiotic bacterium).